Reading from the N-terminus, the 135-residue chain is Probable disulfide formation protein (135 aa).

A helical membrane pass occupies residues 7-26 (SYCLYLAWLFSCIGTLMSVY). Cys-36 and Cys-39 form a disulfide bridge. 2 helical membrane-spanning segments follow: residues 41 to 60 (YQRICLFPLVVILGIAAYRE) and 67 to 84 (YTLPLALVGFGIAIYQVC). A disulfide bridge links Cys-96 with Cys-101. A helical transmembrane segment spans residues 109-131 (GFITMPMASAAAFCAIACLLVLA).

Belongs to the DsbB family. BdbC subfamily.

Its subcellular location is the cell inner membrane. Functionally, required for disulfide bond formation in some proteins. This is Probable disulfide formation protein from Chlamydia trachomatis serovar D (strain ATCC VR-885 / DSM 19411 / UW-3/Cx).